Reading from the N-terminus, the 282-residue chain is MSSYENHQALDGLTLGKSTDYRDNYDASLLQGVPRSLNRDPLDLKADNLPFHGADIWTLYELSWLNAKGVPQVAVGHVELDYTSVNLIESKSFKLYLNSFNQTRFDSWDAVRQTLENDLRACAQGEVSVALYRLDELEGQPAAHFHGTCIDDQDITIDNYQFSTDYLENAASGEKVVEETLVSHLLKSNCLITHQPDWGSIQICYRGRKIDREKLLRYLVSFRHHNEFHEQCVERIFNDLLRFCQPEKLSVYARYTRRGGLDINPWRSNTDFVPATGRLVRQ.

88-90 is a substrate binding site; sequence IES. 90-91 lines the NADPH pocket; the sequence is SK. Cys190 serves as the catalytic Thioimide intermediate. Residue Asp197 is the Proton donor of the active site. A substrate-binding site is contributed by 229–230; it reads HE. Residue 258 to 259 coordinates NADPH; that stretch reads RG.

The protein belongs to the GTP cyclohydrolase I family. QueF type 2 subfamily. Homodimer.

It is found in the cytoplasm. The enzyme catalyses 7-aminomethyl-7-carbaguanine + 2 NADP(+) = 7-cyano-7-deazaguanine + 2 NADPH + 3 H(+). It functions in the pathway tRNA modification; tRNA-queuosine biosynthesis. Catalyzes the NADPH-dependent reduction of 7-cyano-7-deazaguanine (preQ0) to 7-aminomethyl-7-deazaguanine (preQ1). The sequence is that of NADPH-dependent 7-cyano-7-deazaguanine reductase from Citrobacter koseri (strain ATCC BAA-895 / CDC 4225-83 / SGSC4696).